We begin with the raw amino-acid sequence, 479 residues long: Glutamyl-tRNA(Gln) amidotransferase subunit A (479 aa).

Catalysis depends on charge relay system residues Lys71 and Ser146. Residue Ser170 is the Acyl-ester intermediate of the active site.

The protein belongs to the amidase family. GatA subfamily. As to quaternary structure, heterotrimer of A, B and C subunits.

It catalyses the reaction L-glutamyl-tRNA(Gln) + L-glutamine + ATP + H2O = L-glutaminyl-tRNA(Gln) + L-glutamate + ADP + phosphate + H(+). Allows the formation of correctly charged Gln-tRNA(Gln) through the transamidation of misacylated Glu-tRNA(Gln) in organisms which lack glutaminyl-tRNA synthetase. The reaction takes place in the presence of glutamine and ATP through an activated gamma-phospho-Glu-tRNA(Gln). This chain is Glutamyl-tRNA(Gln) amidotransferase subunit A, found in Lactobacillus acidophilus (strain ATCC 700396 / NCK56 / N2 / NCFM).